Here is a 300-residue protein sequence, read N- to C-terminus: Ribosomal protein bS6--L-glutamate ligase (300 aa).

The 184-residue stretch at 104–287 (MQLLARQGID…IAGKMIRWIE (184 aa)) folds into the ATP-grasp domain. Residues lysine 141, 178–179 (EY), aspartate 187, and 211–213 (RSN) contribute to the ATP site. Mg(2+)-binding residues include aspartate 248, glutamate 260, and asparagine 262. Mn(2+) is bound by residues aspartate 248, glutamate 260, and asparagine 262.

This sequence belongs to the RimK family. Mg(2+) serves as cofactor. It depends on Mn(2+) as a cofactor.

In terms of biological role, an L-glutamate ligase that catalyzes the ATP-dependent post-translational addition of glutamate residues to the C-terminus of ribosomal protein bS6 (RpsF). Is also able to catalyze the synthesis of poly-alpha-glutamate in vitro, via ATP hydrolysis from unprotected glutamate as substrate. The number of glutamate residues added to either RpsF or to poly-alpha-glutamate changes with pH. This Shigella boydii serotype 4 (strain Sb227) protein is Ribosomal protein bS6--L-glutamate ligase.